Consider the following 454-residue polypeptide: Chromosomal replication initiator protein DnaA (454 aa).

The interval 1–74 is domain I, interacts with DnaA modulators; sequence MFDLDKFWQF…IQEAYAYADM (74 aa). The interval 74–116 is domain II; it reads MEIQPKFEVAGKEGPERLVTPQPRIKTNQEILENRRDEFAQDL. Residues 117–333 form a domain III, AAA+ region region; the sequence is QLNSKYTFDT…GALVKVQAHA (217 aa). Residues Gly161, Gly163, Lys164, and Thr165 each contribute to the ATP site. Residues 334 to 454 are domain IV, binds dsDNA; it reads TIEREDINVD…VYDLKAMLEH (121 aa).

It belongs to the DnaA family. Oligomerizes as a right-handed, spiral filament on DNA at oriC.

It is found in the cytoplasm. In terms of biological role, plays an essential role in the initiation and regulation of chromosomal replication. ATP-DnaA binds to the origin of replication (oriC) to initiate formation of the DNA replication initiation complex once per cell cycle. Binds the DnaA box (a 9 base pair repeat at the origin) and separates the double-stranded (ds)DNA. Forms a right-handed helical filament on oriC DNA; dsDNA binds to the exterior of the filament while single-stranded (ss)DNA is stabiized in the filament's interior. The ATP-DnaA-oriC complex binds and stabilizes one strand of the AT-rich DNA unwinding element (DUE), permitting loading of DNA polymerase. After initiation quickly degrades to an ADP-DnaA complex that is not apt for DNA replication. Binds acidic phospholipids. This chain is Chromosomal replication initiator protein DnaA, found in Lactobacillus johnsonii (strain CNCM I-12250 / La1 / NCC 533).